The following is a 182-amino-acid chain: dCTP deaminase, dUMP-forming (182 aa).

DCTP-binding positions include 96 to 101 (RSSIGR), D113, 121 to 123 (TLE), Q142, Y156, and Q163. Catalysis depends on E123, which acts as the Proton donor/acceptor.

It belongs to the dCTP deaminase family. Homotrimer.

The enzyme catalyses dCTP + 2 H2O = dUMP + NH4(+) + diphosphate. It functions in the pathway pyrimidine metabolism; dUMP biosynthesis; dUMP from dCTP: step 1/1. Functionally, bifunctional enzyme that catalyzes both the deamination of dCTP to dUTP and the hydrolysis of dUTP to dUMP without releasing the toxic dUTP intermediate. The sequence is that of dCTP deaminase, dUMP-forming from Halothermothrix orenii (strain H 168 / OCM 544 / DSM 9562).